Here is a 134-residue protein sequence, read N- to C-terminus: Large ribosomal subunit protein uL18 (134 aa).

It belongs to the universal ribosomal protein uL18 family. In terms of assembly, part of the 50S ribosomal subunit; part of the 5S rRNA/L5/L18/L25 subcomplex. Contacts the 5S and 23S rRNAs.

In terms of biological role, this is one of the proteins that bind and probably mediate the attachment of the 5S RNA into the large ribosomal subunit, where it forms part of the central protuberance. The chain is Large ribosomal subunit protein uL18 from Corynebacterium glutamicum (strain ATCC 13032 / DSM 20300 / JCM 1318 / BCRC 11384 / CCUG 27702 / LMG 3730 / NBRC 12168 / NCIMB 10025 / NRRL B-2784 / 534).